An 88-amino-acid polypeptide reads, in one-letter code: Cytochrome c oxidase assembly factor 3, mitochondrial (88 aa).

The Mitochondrial matrix segment spans residues 1–32 (MGKLVGAPKGHDRYRDPKTHQITPALYRVRAP). Residues 33–55 (FFWRNTIALFAVSSIPLAVYLYT) form a helical membrane-spanning segment. Residues 56-88 (FKKMGDDDLGDIPIPPISDEELQKLKLEYENQK) lie on the Mitochondrial intermembrane side of the membrane.

Belongs to the COA3 family. Component of 250-400 kDa complexes called cytochrome oxidase assembly intermediates or COA complexes.

It is found in the mitochondrion inner membrane. Functionally, required for assembly of cytochrome c oxidase (complex IV). This chain is Cytochrome c oxidase assembly factor 3, mitochondrial (COA3), found in Candida albicans (strain WO-1) (Yeast).